A 226-amino-acid polypeptide reads, in one-letter code: MHTTQKDTTYTKIFVGGLPYHTTDSSLRKYFEVFGDIEEAVVITDRQTGKSRGYGFVTMADRAAAERACKDPNPIIDGRKANVNLAYLGAKPRIMQPGFAFGVQQIHPALIQRPFGIPAHYVYPHAFVQPGVVIPHVQQAAAASTSPYIDYTSAAYAQYSAAAAAAAAYDQYPYAASPATTGYVTTAGYGYAVPQPLTAAAPGTAAAAAAAFGQYQPQQLQADRMQ.

The RRM domain occupies 11 to 88; sequence TKIFVGGLPY…RKANVNLAYL (78 aa).

The protein resides in the nucleus. It is found in the cytoplasm. Multifunctional RNA-binding protein involved in the regulation of pre-mRNA splicing, mRNA stability and mRNA translation important for cell fate decision and differentiation. Plays a major role in pre-mRNA alternative splicing regulation. Mediates preferentially muscle-specific exon inclusion in numerous mRNAs important for striated cardiac and skeletal muscle cell differentiation. Binds to intronic splicing enhancer (ISE) composed of stretches of GU-rich motifs localized in flanking intron of exon that will be included by alternative splicing. Involved in embryonic stem cell (ESC) transition to cardiac cell differentiation by promoting pre-mRNA alternative splicing events of several pluripotency and/or differentiation genes. Plays a role in the regulation of mRNA stability and mRNA translation to which it is bound. Involved in myogenic differentiation by regulating myog levels. Binds to a huge amount of mRNAs. Required for embryonic heart development, sarcomer and M-band formation in striated muscles. This Xenopus tropicalis (Western clawed frog) protein is RNA-binding protein 24 (rbm24).